Reading from the N-terminus, the 478-residue chain is Muscarinic acetylcholine receptor M4 (478 aa).

Residues 1 to 30 are Extracellular-facing; that stretch reads MXNFTPVNGSSANQSVRLVTAAHNHLETVE. Residues Asn8 and Asn13 are each glycosylated (N-linked (GlcNAc...) asparagine). A helical membrane pass occupies residues 31–53; that stretch reads MVFIATVTGSLSLVTVVGNILVM. Over 54-67 the chain is Cytoplasmic; it reads LSIKVNRQLQTVNN. Residues 68 to 88 traverse the membrane as a helical segment; sequence YFLFSLGCADLIIGAFSMNLY. At 89-105 the chain is on the extracellular side; the sequence is TLYIIKGYWPLGAVVCD. An intrachain disulfide couples Cys104 to Cys184. A helical membrane pass occupies residues 106 to 127; it reads LWLALDYVVSNASVMNLLIISF. Topologically, residues 128–147 are cytoplasmic; it reads DRYFCVTKPLTYPARRTTKM. Residues 148-170 form a helical membrane-spanning segment; it reads AGLMIAAAWVLSFVLWAPAILFW. Topologically, residues 171–192 are extracellular; the sequence is QFVVGKRTVPDNQCFIQFLSNP. The helical transmembrane segment at 193 to 215 threads the bilayer; sequence AVTFGTAIAAFYLPVVIMTVLYI. At 216-400 the chain is on the cytoplasmic side; that stretch reads HISLASRSRV…AARERKVTRT (185 aa). The segment at 271-333 is disordered; sequence LEEAPPPALP…APTLQPRTLN (63 aa). Positions 274-285 are enriched in pro residues; sequence APPPALPPPPRP. Positions 293-303 are enriched in polar residues; sequence NESSSGSATQN. Low complexity predominate over residues 310-332; that stretch reads TELSTAEATTPALPAPTLQPRTL. Residues 401 to 421 form a helical membrane-spanning segment; it reads IFAILLAFILTWTPYNVMVLV. The Extracellular portion of the chain corresponds to 422–435; the sequence is NTFCQSCIPERVWS. The chain crosses the membrane as a helical span at residues 436–455; it reads IGYWLCYVNSTINPACYALC. Over 456-478 the chain is Cytoplasmic; the sequence is NATFKKTFRHLLLCQYRNIGTAR. Phosphothreonine occurs at positions 458, 462, and 476.

The protein belongs to the G-protein coupled receptor 1 family. Muscarinic acetylcholine receptor subfamily. CHRM4 sub-subfamily.

The protein resides in the cell membrane. It is found in the postsynaptic cell membrane. Functionally, the muscarinic acetylcholine receptor mediates various cellular responses, including inhibition of adenylate cyclase, breakdown of phosphoinositides and modulation of potassium channels through the action of G proteins. Primary transducing effect is inhibition of adenylate cyclase. This Rattus norvegicus (Rat) protein is Muscarinic acetylcholine receptor M4 (Chrm4).